Reading from the N-terminus, the 214-residue chain is Adenylate kinase (214 aa).

10–15 (GAGKGT) contributes to the ATP binding site. Residues 30–59 (STGDMLRAAVKAGSELGKQAKAIMDAGKLV) form an NMP region. Residues T31, R36, 57-59 (KLV), 85-88 (GFPR), and Q92 each bind AMP. Residues 122–159 (GRRVHPGSGRVYHVKFNPPQVEGKDDVTGEDLMTRKDD) are LID. Residues R123 and 132-133 (VY) each bind ATP. Positions 156 and 167 each coordinate AMP. Q200 serves as a coordination point for ATP.

It belongs to the adenylate kinase family. In terms of assembly, monomer.

The protein localises to the cytoplasm. The enzyme catalyses AMP + ATP = 2 ADP. It functions in the pathway purine metabolism; AMP biosynthesis via salvage pathway; AMP from ADP: step 1/1. Catalyzes the reversible transfer of the terminal phosphate group between ATP and AMP. Plays an important role in cellular energy homeostasis and in adenine nucleotide metabolism. In Edwardsiella ictaluri (strain 93-146), this protein is Adenylate kinase.